The following is a 137-amino-acid chain: Small ribosomal subunit protein uS11 (137 aa).

The disordered stretch occupies residues 116–137 (EDVTPVPSDSTRKKGGRRGRRL). Basic residues predominate over residues 128 to 137 (KKGGRRGRRL).

This sequence belongs to the universal ribosomal protein uS11 family.

This is Small ribosomal subunit protein uS11 (RPS14) from Kluyveromyces lactis (strain ATCC 8585 / CBS 2359 / DSM 70799 / NBRC 1267 / NRRL Y-1140 / WM37) (Yeast).